Reading from the N-terminus, the 175-residue chain is MLTTGMFLLEGSLLSPNPGLIFWTAVTFLLLLLLLKKLAWGPILSALEEREKSIQSAIDRANSAKDDAEKLLSKNKDAMNKAEVEADRIIKEGKEYAEKMRNEIVTKAQEEAKKIAAQAKAEIEQEKQQALNALRDEVATLAVKGAEKIIRMNLDAEKHKAVVEGMLEDLSTKRN.

A helical membrane pass occupies residues 13–33; sequence LLSPNPGLIFWTAVTFLLLLL.

The protein belongs to the ATPase B chain family. As to quaternary structure, F-type ATPases have 2 components, F(1) - the catalytic core - and F(0) - the membrane proton channel. F(1) has five subunits: alpha(3), beta(3), gamma(1), delta(1), epsilon(1). F(0) has four main subunits: a(1), b(2) and c(10-14). The alpha and beta chains form an alternating ring which encloses part of the gamma chain. F(1) is attached to F(0) by a central stalk formed by the gamma and epsilon chains, while a peripheral stalk is formed by the delta and b chains.

Its subcellular location is the cell inner membrane. In terms of biological role, f(1)F(0) ATP synthase produces ATP from ADP in the presence of a proton or sodium gradient. F-type ATPases consist of two structural domains, F(1) containing the extramembraneous catalytic core and F(0) containing the membrane proton channel, linked together by a central stalk and a peripheral stalk. During catalysis, ATP synthesis in the catalytic domain of F(1) is coupled via a rotary mechanism of the central stalk subunits to proton translocation. Functionally, component of the F(0) channel, it forms part of the peripheral stalk, linking F(1) to F(0). This chain is ATP synthase subunit b, found in Chloroherpeton thalassium (strain ATCC 35110 / GB-78).